The following is a 660-amino-acid chain: UvrABC system protein B (660 aa).

The Helicase ATP-binding domain maps to 25–183; it reads EGLNKGLKHQ…ALINIHYERN (159 aa). 38-45 provides a ligand contact to ATP; sequence GVTGSGKT. A Beta-hairpin motif is present at residues 91–114; it reads YYDYYQPEAYLPTTDTYIEKDSSV. Positions 431 to 593 constitute a Helicase C-terminal domain; the sequence is QIDDLIGEVN…IVPQTIHKAL (163 aa). The 36-residue stretch at 622–657 folds into the UVR domain; that stretch reads ADMVIELEAEMHLAAKNLEFERAAALRDNIKELRST.

Belongs to the UvrB family. Forms a heterotetramer with UvrA during the search for lesions. Interacts with UvrC in an incision complex.

The protein resides in the cytoplasm. Functionally, the UvrABC repair system catalyzes the recognition and processing of DNA lesions. A damage recognition complex composed of 2 UvrA and 2 UvrB subunits scans DNA for abnormalities. Upon binding of the UvrA(2)B(2) complex to a putative damaged site, the DNA wraps around one UvrB monomer. DNA wrap is dependent on ATP binding by UvrB and probably causes local melting of the DNA helix, facilitating insertion of UvrB beta-hairpin between the DNA strands. Then UvrB probes one DNA strand for the presence of a lesion. If a lesion is found the UvrA subunits dissociate and the UvrB-DNA preincision complex is formed. This complex is subsequently bound by UvrC and the second UvrB is released. If no lesion is found, the DNA wraps around the other UvrB subunit that will check the other stand for damage. This is UvrABC system protein B from Methanococcoides burtonii (strain DSM 6242 / NBRC 107633 / OCM 468 / ACE-M).